Here is a 54-residue protein sequence, read N- to C-terminus: Small ribosomal subunit protein uS14 (54 aa).

4 residues coordinate Zn(2+): Cys19, Cys22, Cys37, and Cys40.

This sequence belongs to the universal ribosomal protein uS14 family. Zinc-binding uS14 subfamily. In terms of assembly, part of the 30S ribosomal subunit. It depends on Zn(2+) as a cofactor.

Functionally, binds 16S rRNA, required for the assembly of 30S particles. The chain is Small ribosomal subunit protein uS14 from Sulfolobus acidocaldarius (strain ATCC 33909 / DSM 639 / JCM 8929 / NBRC 15157 / NCIMB 11770).